The sequence spans 182 residues: Isopentenyl-diphosphate Delta-isomerase (182 aa).

Residues histidine 25 and histidine 32 each coordinate Mn(2+). Residues leucine 30–methionine 164 form the Nudix hydrolase domain. Cysteine 67 is an active-site residue. Mn(2+) is bound at residue histidine 69. A Mg(2+)-binding site is contributed by glutamate 87. Mn(2+) contacts are provided by glutamate 114 and glutamate 116. Residue glutamate 116 is part of the active site.

This sequence belongs to the IPP isomerase type 1 family. As to quaternary structure, homodimer. Mg(2+) serves as cofactor. Mn(2+) is required as a cofactor.

The protein resides in the cytoplasm. It carries out the reaction isopentenyl diphosphate = dimethylallyl diphosphate. The protein operates within isoprenoid biosynthesis; dimethylallyl diphosphate biosynthesis; dimethylallyl diphosphate from isopentenyl diphosphate: step 1/1. Its function is as follows. Catalyzes the 1,3-allylic rearrangement of the homoallylic substrate isopentenyl (IPP) to its highly electrophilic allylic isomer, dimethylallyl diphosphate (DMAPP). This chain is Isopentenyl-diphosphate Delta-isomerase, found in Escherichia coli O127:H6 (strain E2348/69 / EPEC).